The primary structure comprises 249 residues: Indole-3-glycerol phosphate synthase (249 aa).

Belongs to the TrpC family.

The enzyme catalyses 1-(2-carboxyphenylamino)-1-deoxy-D-ribulose 5-phosphate + H(+) = (1S,2R)-1-C-(indol-3-yl)glycerol 3-phosphate + CO2 + H2O. It participates in amino-acid biosynthesis; L-tryptophan biosynthesis; L-tryptophan from chorismate: step 4/5. The chain is Indole-3-glycerol phosphate synthase from Pyrobaculum neutrophilum (strain DSM 2338 / JCM 9278 / NBRC 100436 / V24Sta) (Thermoproteus neutrophilus).